The sequence spans 906 residues: Protein translocase subunit SecA (906 aa).

Residues Gln87, 105 to 109 (GEGKT), and Asp507 each bind ATP. A compositionally biased stretch (basic and acidic residues) spans 553-563 (RHESRRIDNQL). Disordered stretches follow at residues 553-576 (RHES…PGSS) and 854-906 (LEEP…GRLA). Zn(2+) contacts are provided by Cys890, Cys892, Cys901, and His902. Residues 896–906 (KKYKQCHGRLA) are compositionally biased toward basic residues.

The protein belongs to the SecA family. As to quaternary structure, monomer and homodimer. Part of the essential Sec protein translocation apparatus which comprises SecA, SecYEG and auxiliary proteins SecDF-YajC and YidC. The cofactor is Zn(2+).

Its subcellular location is the cell inner membrane. The protein resides in the cytoplasm. The catalysed reaction is ATP + H2O + cellular proteinSide 1 = ADP + phosphate + cellular proteinSide 2.. In terms of biological role, part of the Sec protein translocase complex. Interacts with the SecYEG preprotein conducting channel. Has a central role in coupling the hydrolysis of ATP to the transfer of proteins into and across the cell membrane, serving both as a receptor for the preprotein-SecB complex and as an ATP-driven molecular motor driving the stepwise translocation of polypeptide chains across the membrane. The sequence is that of Protein translocase subunit SecA from Methylococcus capsulatus (strain ATCC 33009 / NCIMB 11132 / Bath).